The primary structure comprises 145 residues: Protein H2A.5 (145 aa).

The disordered stretch occupies residues 118 to 145; it reads SPAAAEKEAKSQKAAAKSPKKKTAATKE. The short motif at 135–138 is the SPKK motif element; that stretch reads SPKK. A compositionally biased stretch (basic residues) spans 135–145; the sequence is SPKKKTAATKE.

This sequence belongs to the histone H2A family. In terms of assembly, the nucleosome is a histone octamer containing two molecules each of H2A, H2B, H3 and H4 assembled in one H3-H4 heterotetramer and two H2A-H2B heterodimers. The octamer wraps approximately 147 bp of DNA. In terms of tissue distribution, abundant in meristematic tissues.

The protein localises to the nucleus. The protein resides in the chromosome. Core component of nucleosome. Nucleosomes wrap and compact DNA into chromatin, limiting DNA accessibility to the cellular machineries which require DNA as a template. Histones thereby play a central role in transcription regulation, DNA repair, DNA replication and chromosomal stability. DNA accessibility is regulated via a complex set of post-translational modifications of histones, also called histone code, and nucleosome remodeling. In Triticum aestivum (Wheat), this protein is Protein H2A.5 (H2A-2).